A 626-amino-acid polypeptide reads, in one-letter code: Nuclear RNA export factor 1 (626 aa).

The segment covering Met1–Val16 has biased composition (basic and acidic residues). A disordered region spans residues Met1–Ala85. N-acetylalanine is present on Ala2. Residues Ala2 to Ala60 are minor non-specific RNA-binding. The interval Ala2–Asn118 is RNA-binding (RBD). The interval Ala2–His198 is interaction with ALYREF/THOC4 and LUZP4. Ser9 bears the Phosphoserine mark. Basic residues predominate over residues Gln20 to Phe29. Arg42 bears the Asymmetric dimethylarginine; alternate mark. Arg42 carries the post-translational modification Omega-N-methylarginine; alternate. The tract at residues Met61–Asn118 is major non-specific RNA-binding. Residues Met61–Asn118 are RNA binding. The short motif at Gly67–Arg100 is the Nuclear localization signal element. The Nuclear export signal motif lies at Gly83–Thr110. The region spanning Trp119–His198 is the RRM domain. Tyr126 bears the 3'-nitrotyrosine mark. LRR repeat units lie at residues Glu266–Pro291, Asn292–Leu315, Lys316–Glu350, and Arg351–Pro378. Residues Leu393–Val543 form the NTF2 domain. The region spanning Pro572 to Lys626 is the TAP-C domain.

The protein belongs to the NXF family. Heterodimer (via NTF2 domain) with NXT1. The formation of NXF1-NXT1 heterodimers is required for the NXF1-mediated nuclear mRNA export. Forms a complex with RANBP2/NUP358, NXT1 and RANGAP1. Associates with the exon junction complex (EJC) and with the transcription/export (TREX) complex. Found in a mRNA complex with UPF3A and UPF3B. Found in a post-splicing complex with RBM8A, UPF1, UPF2, UPF3A, UPF3B and RNPS1. Interacts (via N-terminus) with DHX9 (via N-terminus); this interaction is direct and negatively regulates NXF1-mediated nuclear export of constitutive transport element (CTE)-containing cellular mRNAs. Interacts with ALYREF/THOC4. Interacts with FYTTD1/UIF. Interacts with EIF4A3. Interacts with NUPL2. Interacts with THOC5. Interacts with CHTOP. Interacts with FRG1 (via N-terminus). Interacts with LUZP4. Interacts with FMR1; the interaction occurs in a mRNA-dependent and polyribosomes-independent manner in the nucleus. Interacts with CPSF6 (via N-terminus); this interaction is direct. Interacts with RBM15. Interacts with RBM15B. Interacts with MCM3AP; this interaction is not mediated by RNA.

It localises to the nucleus. The protein localises to the nucleoplasm. Its subcellular location is the nucleus speckle. It is found in the cytoplasm. Involved in the nuclear export of mRNA species bearing retroviral constitutive transport elements (CTE) and in the export of mRNA from the nucleus to the cytoplasm (TAP/NFX1 pathway). The NXF1-NXT1 heterodimer is involved in the export of HSP70 mRNA in conjunction with ALYREF/THOC4 and THOC5 components of the TREX complex. ALYREF/THOC4-bound mRNA is thought to be transferred to the NXF1-NXT1 heterodimer for export. Also involved in nuclear export of m6A-containing mRNAs: interaction between SRSF3 and YTHDC1 facilitates m6A-containing mRNA-binding to both SRSF3 and NXF1, promoting mRNA nuclear export. In Pongo abelii (Sumatran orangutan), this protein is Nuclear RNA export factor 1 (NXF1).